A 155-amino-acid polypeptide reads, in one-letter code: FAD synthase (155 aa).

Residues Thr-9–Phe-10, His-14–His-17, and Asp-92 contribute to the ATP site.

Belongs to the archaeal FAD synthase family. Homodimer. A divalent metal cation is required as a cofactor.

The enzyme catalyses FMN + ATP + H(+) = FAD + diphosphate. The protein operates within cofactor biosynthesis; FAD biosynthesis; FAD from FMN: step 1/1. Its function is as follows. Catalyzes the transfer of the AMP portion of ATP to flavin mononucleotide (FMN) to produce flavin adenine dinucleotide (FAD) coenzyme. In Archaeoglobus profundus (strain DSM 5631 / JCM 9629 / NBRC 100127 / Av18), this protein is FAD synthase.